A 328-amino-acid chain; its full sequence is Lipoyl synthase (328 aa).

[4Fe-4S] cluster-binding residues include Cys57, Cys62, Cys68, Cys83, Cys87, Cys90, and Ser298. The 219-residue stretch at 69–287 (WSRGTATFML…REEGLSLGFL (219 aa)) folds into the Radical SAM core domain.

It belongs to the radical SAM superfamily. Lipoyl synthase family. It depends on [4Fe-4S] cluster as a cofactor.

The protein resides in the cytoplasm. It catalyses the reaction [[Fe-S] cluster scaffold protein carrying a second [4Fe-4S](2+) cluster] + N(6)-octanoyl-L-lysyl-[protein] + 2 oxidized [2Fe-2S]-[ferredoxin] + 2 S-adenosyl-L-methionine + 4 H(+) = [[Fe-S] cluster scaffold protein] + N(6)-[(R)-dihydrolipoyl]-L-lysyl-[protein] + 4 Fe(3+) + 2 hydrogen sulfide + 2 5'-deoxyadenosine + 2 L-methionine + 2 reduced [2Fe-2S]-[ferredoxin]. Its pathway is protein modification; protein lipoylation via endogenous pathway; protein N(6)-(lipoyl)lysine from octanoyl-[acyl-carrier-protein]: step 2/2. In terms of biological role, catalyzes the radical-mediated insertion of two sulfur atoms into the C-6 and C-8 positions of the octanoyl moiety bound to the lipoyl domains of lipoate-dependent enzymes, thereby converting the octanoylated domains into lipoylated derivatives. The chain is Lipoyl synthase from Deinococcus geothermalis (strain DSM 11300 / CIP 105573 / AG-3a).